The chain runs to 37 residues: Cytochrome b6-f complex subunit 5 (37 aa).

Residues 5–25 (LLSGIVLGMITVSAFGLFVAA) traverse the membrane as a helical segment.

Belongs to the PetG family. In terms of assembly, the 4 large subunits of the cytochrome b6-f complex are cytochrome b6, subunit IV (17 kDa polypeptide, PetD), cytochrome f and the Rieske protein, while the 4 small subunits are PetG, PetL, PetM and PetN. The complex functions as a dimer.

It is found in the plastid. It localises to the chloroplast thylakoid membrane. Its function is as follows. Component of the cytochrome b6-f complex, which mediates electron transfer between photosystem II (PSII) and photosystem I (PSI), cyclic electron flow around PSI, and state transitions. PetG is required for either the stability or assembly of the cytochrome b6-f complex. The chain is Cytochrome b6-f complex subunit 5 from Thalassiosira pseudonana (Marine diatom).